A 276-amino-acid chain; its full sequence is Diaminopimelate epimerase (276 aa).

3 residues coordinate substrate: asparagine 13, glutamine 46, and asparagine 66. Cysteine 75 (proton donor) is an active-site residue. Residues 76-77, asparagine 159, asparagine 192, and 210-211 each bind substrate; these read GN and ER. The active-site Proton acceptor is cysteine 219. 220-221 is a substrate binding site; that stretch reads GT.

Belongs to the diaminopimelate epimerase family. As to quaternary structure, homodimer.

It localises to the cytoplasm. It catalyses the reaction (2S,6S)-2,6-diaminopimelate = meso-2,6-diaminopimelate. The protein operates within amino-acid biosynthesis; L-lysine biosynthesis via DAP pathway; DL-2,6-diaminopimelate from LL-2,6-diaminopimelate: step 1/1. Its function is as follows. Catalyzes the stereoinversion of LL-2,6-diaminopimelate (L,L-DAP) to meso-diaminopimelate (meso-DAP), a precursor of L-lysine and an essential component of the bacterial peptidoglycan. The chain is Diaminopimelate epimerase from Pseudomonas fluorescens (strain Pf0-1).